Reading from the N-terminus, the 167-residue chain is Small ribosomal subunit protein uS9 (167 aa).

The segment at 1 to 41 (MNTEAVAPDVAEEEVLTSYTSESSASADDAPKKERPALTVS) is disordered. Residues 17-26 (TSYTSESSAS) are compositionally biased toward polar residues.

Belongs to the universal ribosomal protein uS9 family.

The sequence is that of Small ribosomal subunit protein uS9 from Renibacterium salmoninarum (strain ATCC 33209 / DSM 20767 / JCM 11484 / NBRC 15589 / NCIMB 2235).